A 281-amino-acid chain; its full sequence is Pantothenate synthetase (281 aa).

30 to 37 contributes to the ATP binding site; that stretch reads MGNLHQGH. H37 functions as the Proton donor in the catalytic mechanism. Residue Q61 participates in (R)-pantoate binding. Q61 contributes to the beta-alanine binding site. Residue 149–152 coordinates ATP; that stretch reads GNKD. Position 155 (Q155) interacts with (R)-pantoate. Residues I178 and 186-189 each bind ATP; that span reads MSSR.

Belongs to the pantothenate synthetase family. Homodimer.

The protein resides in the cytoplasm. The catalysed reaction is (R)-pantoate + beta-alanine + ATP = (R)-pantothenate + AMP + diphosphate + H(+). The protein operates within cofactor biosynthesis; (R)-pantothenate biosynthesis; (R)-pantothenate from (R)-pantoate and beta-alanine: step 1/1. Its function is as follows. Catalyzes the condensation of pantoate with beta-alanine in an ATP-dependent reaction via a pantoyl-adenylate intermediate. The chain is Pantothenate synthetase from Shewanella baltica (strain OS195).